Here is a 538-residue protein sequence, read N- to C-terminus: Syncytin-2 (538 aa).

Residues 1–15 (MGLLLLVLILTPSLA) form the signal peptide. Residues 16–478 (AYRHPDFPLL…GWLNWEGTWK (463 aa)) lie on the Extracellular side of the membrane. The short motif at 43–46 (CWLC) is the CXXC element. 3 disulfide bridges follow: C43–C46, C43–C439, and C431–C438. 8 N-linked (GlcNAc...) asparagine glycosylation sites follow: N133, N146, N177, N220, N241, N247, N312, and N332. Residues 354–374 (FIPLLAGLGILAGTGTGIAGI) are fusion peptide. A CKS-17 motif is present at residues 414 to 430 (LQNRRGLDMLTAAQGGI). Positions 431-439 (CLALDEKCC) match the CX6CC motif. A glycan (N-linked (GlcNAc...) asparagine) is linked at N443. Residues 479–499 (WFSWVLPLTGPLVSLLLLLLF) form a helical membrane-spanning segment. The Cytoplasmic portion of the chain corresponds to 500–538 (GPCLLNLITQFVSSRLQAIKLQTNLSAGRHPRNIQESPF).

It belongs to the gamma type-C retroviral envelope protein family. HERV class-I FRD env subfamily. The surface and transmembrane proteins form a heterodimer. They are attached by non-covalent interactions or by a labile interchain disulfide bond. In terms of processing, specific enzymatic cleavages in vivo yield the mature SU and TM proteins. The CXXC motif is highly conserved across a broad range of retroviral envelope proteins. It is thought to participate in the formation of a labile disulfide bond possibly with the CX6CC motif present in the transmembrane protein.

Its subcellular location is the virion. The protein localises to the cell membrane. Functionally, this endogenous retroviral envelope protein has retained its original fusogenic properties and participates in trophoblast fusion and the formation of a syncytium during placenta morphogenesis. The interaction with MFSD2A is apparently important for this process. In terms of biological role, endogenous envelope proteins may have kept, lost or modified their original function during evolution but this one can still make pseudotypes with MLV, HIV-1 or SIV-1 virions and confer infectivity. Retroviral envelope proteins mediate receptor recognition and membrane fusion during early infection. The surface protein mediates receptor recognition, while the transmembrane protein anchors the envelope heterodimer to the viral membrane through one transmembrane domain. The other hydrophobic domain, called fusion peptide, mediates fusion of the viral membrane with the target cell membrane. The protein is Syncytin-2 (ERVFRD-1) of Pan troglodytes (Chimpanzee).